Consider the following 366-residue polypeptide: Putative F-box protein At3g13624 (366 aa).

Positions 1–51 (MTTISDLPEDVVEEILPRVPLTSLSAVRSICKTWNTLSKNRVLCKAAVKKQ) constitute an F-box domain.

This chain is Putative F-box protein At3g13624, found in Arabidopsis thaliana (Mouse-ear cress).